Consider the following 151-residue polypeptide: uncharacterized protein (151 aa).

The N-acetyltransferase domain maps to 3 to 151 (IKIDDLTGRQ…PNSVFMTKKL (149 aa)).

Belongs to the acetyltransferase family.

This is an uncharacterized protein from Bacillus subtilis (strain 168).